We begin with the raw amino-acid sequence, 1732 residues long: Polycystin-1-like protein 3 (1732 aa).

The first 23 residues, 1–23 (MFFKGGSWLWLYIRTSIILGSEL), serve as a signal peptide directing secretion. Topologically, residues 24 to 697 (NSPAPHGQNN…IKLFLRVTNN (674 aa)) are extracellular. Residues 30–138 (GQNNCYQLNR…CLLKYYFICQ (109 aa)) form the C-type lectin domain. Cystine bridges form between Cys51–Cys137 and Cys112–Cys129. Residues Asn286, Asn363, Asn515, Asn537, and Asn575 are each glycosylated (N-linked (GlcNAc...) asparagine). Residues 523–685 (TSLNMSTHQL…FVVPRTVNVE (163 aa)) enclose the GAIN-B domain. Cystine bridges form between Cys635/Cys663 and Cys650/Cys665. A GPS region spans residues 635–685 (CYYWEIHNQTWSSAGCQVGPQSTILRTQCLCNHLTFFASDFFVVPRTVNVE). Residues 698–718 (PVGVSLLASLLGFYVITVVWA) traverse the membrane as a helical segment. Over 719 to 905 (RKKDQADMQK…PWNQFTRVQR (187 aa)) the chain is Cytoplasmic. The region spanning 743–860 (FHYLIQVYTG…GDCELDRVFI (118 aa)) is the PLAT domain. Residues 906-926 (LSCCMTLLLCNMVINVMFWKI) traverse the membrane as a helical segment. The Extracellular portion of the chain corresponds to 927-939 (NSTTAKRDEQMRP). The chain crosses the membrane as a helical span at residues 940–960 (FAVAWSELLVSIHTAVILFPI). At 961–1154 (NLVIGRLFPL…ISNGLSKWLT (194 aa)) the chain is on the cytoplasmic side. Residues 1155-1175 (SVCWLLLGFTSLASAFFTALY) form a helical membrane-spanning segment. Over 1176–1198 (SLELSKDQATSWMISIILSVLQN) the chain is Extracellular. The helical transmembrane segment at 1199–1219 (IFISQPVKVVFFTFLYSLMMS) threads the bilayer. The Cytoplasmic portion of the chain corresponds to 1220–1289 (RMPRLNKENE…KLTGDILVQI (70 aa)). The helical transmembrane segment at 1290-1300 (LFLTLLMTAIY) threads the bilayer. The Extracellular segment spans residues 1301-1461 (SAKNSNRFYL…SFTSLQMSKK (161 aa)). The chain crosses the membrane as a helical span at residues 1462-1491 (GCVWSIISQVIYYLLVCYYAFIQGCQLKQQ). Residues 1492 to 1500 (KWRFFTGKR) are Cytoplasmic-facing. A helical transmembrane segment spans residues 1501-1519 (NILDTSIILISFILLGLDM). Residues 1520 to 1550 (KSISLHKKNMARYRDDQDRFISFYEAVKVNS) lie on the Extracellular side of the membrane. Residues 1551-1572 (AATHLVGFPVLLATVQLWNLLR) form a helical membrane-spanning segment. Over 1573–1589 (HSPRLRVISRTLSRAWD) the chain is Cytoplasmic. The chain crosses the membrane as a helical span at residues 1590 to 1614 (EVVGFLLIILILLTGYAIAFNLLFG). Residues 1613–1651 (FGCSISDYRTFFSSAVTVVGLLMGISHQEEVFALDPVLG) form a channel pore-region region. Residues 1615-1647 (CSISDYRTFFSSAVTVVGLLMGISHQEEVFALD) lie on the Extracellular side of the membrane. A helical transmembrane segment spans residues 1648–1667 (PVLGTFLILTSVILMVLVVI). Residues 1668–1732 (NLFVSAILMA…SDTEVLDELP (65 aa)) are Cytoplasmic-facing.

This sequence belongs to the polycystin family. Heterotetramer with PKD2L1, composed of 3 subunit of PKD2L1 and 1 subunit of PKD1L3. Autoproteolytically processed at the GPS region of the GAIN-B domain; this cleavage modulates receptor activity. In terms of tissue distribution, highly expressed in placenta, weakly in heart and lung.

It is found in the cell membrane. The catalysed reaction is Ca(2+)(in) = Ca(2+)(out). It catalyses the reaction Na(+)(in) = Na(+)(out). The enzyme catalyses K(+)(in) = K(+)(out). It carries out the reaction Mg(2+)(in) = Mg(2+)(out). Its activity is regulated as follows. The non-selective cation channel is gated following an off-response property by acid: gated open after the removal of acid stimulus, but not during acid application. Regulation of non-selective cation channel activity by external Ca(2+) is bimodal, first sensitizing and subsequently inactivating the current. Functionally, pore-forming subunit of a heterotetrameric, non-selective cation channel that is permeable to Ca(2+). Also shows permeability towards NA(1+), K(+) and Mg(2+). Heterotetrameric complex channel is activated by external low pH and Ca(2+), but opens only when the extracellular pH rises again and after the removal of acid stimulus. May act as a sour taste receptor in gustatory cells; however, its contribution to sour taste perception is unclear in vivo and may be indirect. This chain is Polycystin-1-like protein 3, found in Homo sapiens (Human).